The sequence spans 183 residues: UPF0200 protein MmarC6_1392 (183 aa).

ATP is bound at residue 8-15 (GMPGSGKS).

The protein belongs to the UPF0200 family.

In Methanococcus maripaludis (strain C6 / ATCC BAA-1332), this protein is UPF0200 protein MmarC6_1392.